Here is a 233-residue protein sequence, read N- to C-terminus: Octanoyltransferase (233 aa).

The region spanning 33–216 (GRAQDTVILL…HLVRALSSNG (184 aa)) is the BPL/LPL catalytic domain. Residues 71-78 (RGGRITWH), 146-148 (AIG), and 159-161 (GFA) contribute to the substrate site. C177 acts as the Acyl-thioester intermediate in catalysis.

The protein belongs to the LipB family.

Its subcellular location is the cytoplasm. The enzyme catalyses octanoyl-[ACP] + L-lysyl-[protein] = N(6)-octanoyl-L-lysyl-[protein] + holo-[ACP] + H(+). The protein operates within protein modification; protein lipoylation via endogenous pathway; protein N(6)-(lipoyl)lysine from octanoyl-[acyl-carrier-protein]: step 1/2. In terms of biological role, catalyzes the transfer of endogenously produced octanoic acid from octanoyl-acyl-carrier-protein onto the lipoyl domains of lipoate-dependent enzymes. Lipoyl-ACP can also act as a substrate although octanoyl-ACP is likely to be the physiological substrate. This Clavibacter michiganensis subsp. michiganensis (strain NCPPB 382) protein is Octanoyltransferase.